We begin with the raw amino-acid sequence, 446 residues long: MDNIMSAEYYLSLYTKYNSKNLDVFRNMLQAIEPSGNYHILHAYCGIKGLDERFVEELLHRGYSPNETDDDGNYPLHIASKINNNRIVAMLLTHGADPNACDKQHKTPLYYLSGTDDEVIERINLLVQYGAKINNSVDEEGCGPLLASTDPSERVFKKIMSIGFEARIVDKFGKNHIHRHLMSDNPKASTISWMMKLGISPSKPDHDGNTPLHIVCSKTVKNVDIINLLLPSTDVNKQNKFGDSPLTLLIKTLSPAHLINKLLSTSNVITDQTVNICIFYDRDDILEIINDKGKQYDSTDFKMAVEVGSIRCIKYLLDNDIICEDAMYYAVLSEYETMVDYLLFNHFSVDSVVNGNTCMSECVRLNNPVILSKLMLHNPTSETMYLTMKAIEKDKLDKSIIIPFIAYFVLMHPDFCKNRRYFTSYKRFVTDYVHEGVSYKVFDDYF.

ANK repeat units lie at residues 71–100, 104–135, 207–237, 241–271, 296–325, and 327–351; these read DGNY…DPNA, QHKT…KINN, DGNT…DVNK, FGDS…VITD, YDST…ICED, and MYYA…SVDS.

This sequence belongs to the orthopoxvirus OPG037 protein family. In terms of assembly, may interact with host caspase-9-Apaf-1 complex.

Its subcellular location is the host cytoplasm. Inhibits host apoptosis. Acts by associating with host apoptosome. This is Inhibitor of Apoptosis OPG037 (OPG037) from Variola virus (isolate Human/India/Ind3/1967) (VARV).